The chain runs to 490 residues: Polyamine transporter RMV1 (490 aa).

Polar residues predominate over residues Met-1–Glu-21. The segment at Met-1–Asp-38 is disordered. Transmembrane regions (helical) follow at residues Ile-53–Ile-73, Leu-83–Ile-103, Gly-116–Val-136, Ile-160–Leu-180, Leu-188–Val-208, Gly-231–Trp-248, Leu-273–Leu-293, Phe-303–Ala-323, Thr-363–Phe-383, Ile-386–Val-406, Val-425–Phe-445, and Leu-448–Leu-468.

Belongs to the amino acid-polyamine-organocation (APC) superfamily. Polyamine:cation symporter (PHS) (TC 2.A.3.12) family.

It localises to the cell membrane. Its function is as follows. Cell membrane polyamine/proton symporter involved in the polyamine uptake in cells. Possesses high affinity for spermine and spermidine and lower affinity for putrescine. Transports paraquat, a polyamine analog, and thus confers sensitivity to this chemical which is used as a herbicide. The sequence is that of Polyamine transporter RMV1 (RMV1) from Arabidopsis thaliana (Mouse-ear cress).